Consider the following 374-residue polypeptide: Multicilin (374 aa).

Residues 164–212 (EQYWRDVADHNQKALGDALVENNQLQVSLTEKQEEIVSLKEKNIQLNEL) adopt a coiled-coil conformation. The disordered stretch occupies residues 230–260 (RTKQNSGATQGRLPVKRSLEDFYPQSNEPDS). Residues 330 to 374 (TDLEDVSFRTSIKEHSTIRTLAFPQGNAFTIRTSGGGYKFRWVPN) form a TIRT domain region.

It belongs to the geminin family. As to quaternary structure, component of the EDM complex, at least composed of e2f4, e2f5, mcidas and tfdp1. As to expression, expressed in multiciliate differentiating cells. Expression is lost by stage 26, when multiciliate cells in the skin are fully differentiated, but is then detected in the developing nephrostomes of the kidneys where multiciliate cells form at later stages.

The protein localises to the nucleus. In terms of biological role, transcription regulator specifically required for multiciliate cell differentiation. Acts in a multiprotein complex containing E2F4 and E2F5 that binds and activates genes required for centriole biogenesis. Activates genes required for centriole assembly (plk4, cep152) and genes specifically required for motile cilia formation (foxj1). Also promotes the deuterosome pathway of centriole biogenesis by activating expression of ccdc67/deup1, but not its paralog cep63. The polypeptide is Multicilin (mcidas) (Xenopus laevis (African clawed frog)).